A 270-amino-acid polypeptide reads, in one-letter code: Phosphatidylglycerol--prolipoprotein diacylglyceryl transferase (270 aa).

The next 4 membrane-spanning stretches (helical) occupy residues 19 to 39, 56 to 76, 92 to 112, and 116 to 136; these read FPVY…LWLA, LVLI…VIFE, QGGL…VLFA, and GLSF…GQAI. Residue arginine 138 coordinates a 1,2-diacyl-sn-glycero-3-phospho-(1'-sn-glycerol). The next 3 membrane-spanning stretches (helical) occupy residues 178–198, 206–226, and 236–256; these read HPTF…LLAL, GELF…VEGL, and LRIA…FIIV.

Belongs to the Lgt family.

Its subcellular location is the cell membrane. It carries out the reaction L-cysteinyl-[prolipoprotein] + a 1,2-diacyl-sn-glycero-3-phospho-(1'-sn-glycerol) = an S-1,2-diacyl-sn-glyceryl-L-cysteinyl-[prolipoprotein] + sn-glycerol 1-phosphate + H(+). It functions in the pathway protein modification; lipoprotein biosynthesis (diacylglyceryl transfer). In terms of biological role, catalyzes the transfer of the diacylglyceryl group from phosphatidylglycerol to the sulfhydryl group of the N-terminal cysteine of a prolipoprotein, the first step in the formation of mature lipoproteins. This Bacillus cereus (strain ATCC 14579 / DSM 31 / CCUG 7414 / JCM 2152 / NBRC 15305 / NCIMB 9373 / NCTC 2599 / NRRL B-3711) protein is Phosphatidylglycerol--prolipoprotein diacylglyceryl transferase.